The sequence spans 314 residues: tRNA dimethylallyltransferase (314 aa).

8–15 (GPTGAGKS) serves as a coordination point for ATP. Substrate is bound at residue 10 to 15 (TGAGKS).

This sequence belongs to the IPP transferase family. In terms of assembly, monomer. Mg(2+) serves as cofactor.

It catalyses the reaction adenosine(37) in tRNA + dimethylallyl diphosphate = N(6)-dimethylallyladenosine(37) in tRNA + diphosphate. Functionally, catalyzes the transfer of a dimethylallyl group onto the adenine at position 37 in tRNAs that read codons beginning with uridine, leading to the formation of N6-(dimethylallyl)adenosine (i(6)A). This is tRNA dimethylallyltransferase from Mycobacterium tuberculosis (strain ATCC 25177 / H37Ra).